Here is a 722-residue protein sequence, read N- to C-terminus: Host cell factor 2 (722 aa).

Kelch repeat units lie at residues 34–79, 83–130, 207–255, and 257–303; these read LMII…GFVC, RILV…RLGH, KMYV…VIGN, and MYIF…VSDS. Fibronectin type-III domains lie at 359-460, 514-604, and 606-716; these read APSQ…VDSS, TPSN…TCTP, and FPGA…DQEK. The interval 398 to 476 is disordered; the sequence is ATSSDSSAAP…LAPNTSNNSS (79 aa). Positions 419–436 are enriched in polar residues; that stretch reads QGSNSTLHNSVSDTVNST.

In terms of assembly, binds KMT2A/MLL1. Component of the MLL1/MLL complex, at least composed of KMT2A/MLL1, ASH2L, RBBP5, DPY30, WDR5, MEN1, HCFC1 and HCFC2. Interacts with TASOR. In terms of tissue distribution, expressed in the spermatogonia, spermatocytes and ovary.

It localises to the cytoplasm. Its subcellular location is the nucleus. The sequence is that of Host cell factor 2 (Hcfc2) from Mus musculus (Mouse).